The following is a 487-amino-acid chain: MKIKAQIGMVMNLDKCIGCHTCSVTCKNTWTNRSGAEYMYFNNVETKPGIGYPKQWEDQDKYKGGWTLKKGKLELKSGSKTNRLAGLFYNPNQPSIDDYYEPWNYDYETLTNSPQKKHQPVARPKSSLTGDFMNIEWGPNWEDDLAGGHITGLEDPNVQKMEESIKTEFDDVFMMYLPRICEHCINPACVSSCPSGAMYKREEDGIVLVDQNACRSWRYCVSSCPYKKVYFNWQTNKAEKCTLCFPRLEAGLPTICSETCVGRIRYLGVMLYDADKVEEAASVENEKDLYHSQLDVFLDPNDPEVAKLAKEQGIPAEWIEAAQQSPIYKMIIDWKIALPLHPEYRTLPMVWYIPPLSPIMNLFEGKGSRQTAEDIFPAIDQMRIPIDYLAQLLTAGDTDHIRSTLKKMSVMRQYMRAVQTNKSIDPELISSVGLTEQQIEDMYRLLAIAKYDDRFVIPSSHREEVSDLYAEQGSCGLSFSGGPGSCF.

3 4Fe-4S ferredoxin-type domains span residues 7–36 (IGMV…RSGA), 172–203 (VFMM…KREE), and 205–234 (GIVL…FNWQ). [4Fe-4S] cluster is bound by residues C16, C19, C22, C26, C181, C184, and C189. [3Fe-4S] cluster contacts are provided by C193, C214, and C220. The [4Fe-4S] cluster site is built by C224, C241, C244, C256, and C260.

It depends on [4Fe-4S] cluster as a cofactor. Requires [3Fe-4S] cluster as cofactor.

It is found in the cell membrane. The catalysed reaction is nitrate + a quinol = a quinone + nitrite + H2O. Its function is as follows. The beta chain is an electron transfer unit containing four cysteine clusters involved in the formation of iron-sulfur centers. Electrons are transferred from the gamma chain to the molybdenum cofactor of the alpha subunit. The polypeptide is Nitrate reductase beta chain (narH) (Bacillus subtilis (strain 168)).